We begin with the raw amino-acid sequence, 97 residues long: Putative pterin-4-alpha-carbinolamine dehydratase (97 aa).

Belongs to the pterin-4-alpha-carbinolamine dehydratase family.

The enzyme catalyses (4aS,6R)-4a-hydroxy-L-erythro-5,6,7,8-tetrahydrobiopterin = (6R)-L-erythro-6,7-dihydrobiopterin + H2O. This Phenylobacterium zucineum (strain HLK1) protein is Putative pterin-4-alpha-carbinolamine dehydratase.